We begin with the raw amino-acid sequence, 208 residues long: dITP/XTP pyrophosphatase (208 aa).

Substrate is bound at residue 17-22 (SNNPGK). Mg(2+)-binding residues include Asp-49 and Asp-78. The active-site Proton acceptor is the Asp-78. Residues Ser-79, 164–167 (FGYD), Lys-187, and 192–193 (HR) each bind substrate.

Belongs to the HAM1 NTPase family. Homodimer. Mg(2+) serves as cofactor.

The catalysed reaction is XTP + H2O = XMP + diphosphate + H(+). The enzyme catalyses dITP + H2O = dIMP + diphosphate + H(+). It carries out the reaction ITP + H2O = IMP + diphosphate + H(+). In terms of biological role, pyrophosphatase that catalyzes the hydrolysis of nucleoside triphosphates to their monophosphate derivatives, with a high preference for the non-canonical purine nucleotides XTP (xanthosine triphosphate), dITP (deoxyinosine triphosphate) and ITP. Seems to function as a house-cleaning enzyme that removes non-canonical purine nucleotides from the nucleotide pool, thus preventing their incorporation into DNA/RNA and avoiding chromosomal lesions. This chain is dITP/XTP pyrophosphatase, found in Burkholderia pseudomallei (strain K96243).